A 150-amino-acid polypeptide reads, in one-letter code: Small ribosomal subunit protein uS13 (150 aa).

Residues 131–150 (QRTKSTFRRGPTVGVSRRKK) form a disordered region.

It belongs to the universal ribosomal protein uS13 family. As to quaternary structure, part of the 30S ribosomal subunit. Forms a loose heterodimer with protein S19. Forms two bridges to the 50S subunit in the 70S ribosome.

Functionally, located at the top of the head of the 30S subunit, it contacts several helices of the 16S rRNA. In the 70S ribosome it contacts the 23S rRNA (bridge B1a) and protein L5 of the 50S subunit (bridge B1b), connecting the 2 subunits; these bridges are implicated in subunit movement. This is Small ribosomal subunit protein uS13 from Methanocaldococcus jannaschii (strain ATCC 43067 / DSM 2661 / JAL-1 / JCM 10045 / NBRC 100440) (Methanococcus jannaschii).